The chain runs to 363 residues: tRNA-specific 2-thiouridylase MnmA (363 aa).

Residues 6–13 (AMSGGVDS) and leucine 32 contribute to the ATP site. The active-site Nucleophile is the cysteine 101. Cysteine 101 and cysteine 193 are oxidised to a cystine. Glycine 125 is a binding site for ATP. Residues 143-145 (KDQ) are interaction with tRNA. Residue cysteine 193 is the Cysteine persulfide intermediate of the active site.

This sequence belongs to the MnmA/TRMU family.

Its subcellular location is the cytoplasm. It catalyses the reaction S-sulfanyl-L-cysteinyl-[protein] + uridine(34) in tRNA + AH2 + ATP = 2-thiouridine(34) in tRNA + L-cysteinyl-[protein] + A + AMP + diphosphate + H(+). In terms of biological role, catalyzes the 2-thiolation of uridine at the wobble position (U34) of tRNA, leading to the formation of s(2)U34. This Mycobacterium marinum (strain ATCC BAA-535 / M) protein is tRNA-specific 2-thiouridylase MnmA.